The sequence spans 104 residues: uncharacterized protein (104 aa).

A signal peptide spans 1 to 18 (MGVEGMWNVFLFSLQVAA). An N-linked (GlcNAc...) asparagine; by host glycan is attached at Asn27.

This is an uncharacterized protein from Fowl adenovirus A serotype 1 (strain CELO / Phelps) (FAdV-1).